Consider the following 146-residue polypeptide: Transcriptional regulator MraZ (146 aa).

SpoVT-AbrB domains lie at 9–55 (TSAL…PRPV) and 81–124 (AMDV…DAQR).

This sequence belongs to the MraZ family. As to quaternary structure, forms oligomers.

The protein localises to the cytoplasm. It is found in the nucleoid. The protein is Transcriptional regulator MraZ of Leptothrix cholodnii (strain ATCC 51168 / LMG 8142 / SP-6) (Leptothrix discophora (strain SP-6)).